A 197-amino-acid chain; its full sequence is Holliday junction branch migration complex subunit RuvA (197 aa).

The domain I stretch occupies residues 1–65; that stretch reads MISQVRGTIM…EDAWHLYGFA (65 aa). The segment at 66–140 is domain II; it reads HAYERAVFQK…DKIDAVGPAP (75 aa). The flexible linker stretch occupies residues 140–144; the sequence is PATGT. The tract at residues 145-197 is domain III; sequence APSPLGDDAVRALIALGYNQTEADRAVRAVVESGAPKDVSSLVRGALSRLTAK.

The protein belongs to the RuvA family. Homotetramer. Forms an RuvA(8)-RuvB(12)-Holliday junction (HJ) complex. HJ DNA is sandwiched between 2 RuvA tetramers; dsDNA enters through RuvA and exits via RuvB. An RuvB hexamer assembles on each DNA strand where it exits the tetramer. Each RuvB hexamer is contacted by two RuvA subunits (via domain III) on 2 adjacent RuvB subunits; this complex drives branch migration. In the full resolvosome a probable DNA-RuvA(4)-RuvB(12)-RuvC(2) complex forms which resolves the HJ.

It is found in the cytoplasm. Functionally, the RuvA-RuvB-RuvC complex processes Holliday junction (HJ) DNA during genetic recombination and DNA repair, while the RuvA-RuvB complex plays an important role in the rescue of blocked DNA replication forks via replication fork reversal (RFR). RuvA specifically binds to HJ cruciform DNA, conferring on it an open structure. The RuvB hexamer acts as an ATP-dependent pump, pulling dsDNA into and through the RuvAB complex. HJ branch migration allows RuvC to scan DNA until it finds its consensus sequence, where it cleaves and resolves the cruciform DNA. The protein is Holliday junction branch migration complex subunit RuvA of Gemmatimonas aurantiaca (strain DSM 14586 / JCM 11422 / NBRC 100505 / T-27).